Consider the following 178-residue polypeptide: MVSVPTAWCSVALALLVALHEGKDQAAATLEQPASSPRARAAHLRLRRCSCSSWLDKECVYFCHLDIIWVNTPGQTAPYGLGNPPRRRRRSLPGRCECSSARDPACATFCHQRSRADAVGVPGSQSSADAFQAGKTWATPGELLRTLRDISAAKTHFAKRQQEATREPRTTHSRHRKR.

Positions 1 to 24 are cleaved as a signal peptide; sequence MVSVPTAWCSVALALLVALHEGKD. Residues 25 to 46 constitute a propeptide that is removed on maturation; it reads QAAATLEQPASSPRARAAHLRL. 2 disulfides stabilise this stretch: cysteine 49-cysteine 63 and cysteine 51-cysteine 59. A propeptide spanning residues 70–178 is cleaved from the precursor; the sequence is VNTPGQTAPY…RTTHSRHRKR (109 aa). Positions 96 to 111 are endothelin-like; sequence CECSSARDPACATFCH. A disordered region spans residues 154–178; that stretch reads KTHFAKRQQEATREPRTTHSRHRKR. Basic and acidic residues predominate over residues 160 to 170; the sequence is RQQEATREPRT.

This sequence belongs to the endothelin/sarafotoxin family.

It is found in the secreted. Its function is as follows. Endothelins are endothelium-derived vasoconstrictor peptides. The chain is Endothelin-2 (EDN2) from Oryctolagus cuniculus (Rabbit).